A 321-amino-acid polypeptide reads, in one-letter code: Aspartate carbamoyltransferase catalytic subunit (321 aa).

Residues Arg-60 and Thr-61 each contribute to the carbamoyl phosphate site. Position 88 (Lys-88) interacts with L-aspartate. Residues Arg-110, His-138, and Gln-141 each coordinate carbamoyl phosphate. Arg-171 and Arg-225 together coordinate L-aspartate. Residues Gly-266 and Pro-267 each contribute to the carbamoyl phosphate site.

This sequence belongs to the aspartate/ornithine carbamoyltransferase superfamily. ATCase family. In terms of assembly, heterododecamer (2C3:3R2) of six catalytic PyrB chains organized as two trimers (C3), and six regulatory PyrI chains organized as three dimers (R2).

It catalyses the reaction carbamoyl phosphate + L-aspartate = N-carbamoyl-L-aspartate + phosphate + H(+). Its pathway is pyrimidine metabolism; UMP biosynthesis via de novo pathway; (S)-dihydroorotate from bicarbonate: step 2/3. In terms of biological role, catalyzes the condensation of carbamoyl phosphate and aspartate to form carbamoyl aspartate and inorganic phosphate, the committed step in the de novo pyrimidine nucleotide biosynthesis pathway. The protein is Aspartate carbamoyltransferase catalytic subunit of Sorangium cellulosum (strain So ce56) (Polyangium cellulosum (strain So ce56)).